We begin with the raw amino-acid sequence, 288 residues long: UTP--glucose-1-phosphate uridylyltransferase (288 aa).

The protein belongs to the UDPGP type 2 family.

The catalysed reaction is alpha-D-glucose 1-phosphate + UTP + H(+) = UDP-alpha-D-glucose + diphosphate. Its pathway is glycolipid metabolism; diglucosyl-diacylglycerol biosynthesis. Catalyzes the formation of UDP-glucose from glucose-1-phosphate and UTP. This is an intermediate step in the biosynthesis of diglucosyl-diacylglycerol (Glc2-DAG), i.e. the predominant glycolipid found in the S.aureus membrane, which is also used as a membrane anchor for lipoteichoic acid (LTA). This is UTP--glucose-1-phosphate uridylyltransferase (gtaB) from Staphylococcus aureus (strain MRSA252).